Here is a 141-residue protein sequence, read N- to C-terminus: Large ribosomal subunit protein uL11 (141 aa).

The protein belongs to the universal ribosomal protein uL11 family. As to quaternary structure, part of the ribosomal stalk of the 50S ribosomal subunit. Interacts with L10 and the large rRNA to form the base of the stalk. L10 forms an elongated spine to which L12 dimers bind in a sequential fashion forming a multimeric L10(L12)X complex. Post-translationally, one or more lysine residues are methylated.

Functionally, forms part of the ribosomal stalk which helps the ribosome interact with GTP-bound translation factors. This Trichodesmium erythraeum (strain IMS101) protein is Large ribosomal subunit protein uL11.